Reading from the N-terminus, the 388-residue chain is Fructose-bisphosphate aldolase, chloroplastic (388 aa).

The N-terminal 38 residues, 1–38 (MASATLLKSSFLPKKSEWGATRQAAAPKPVTVSMVVRA), are a transit peptide targeting the chloroplast. A substrate-binding site is contributed by arginine 72. The active-site Proton acceptor is the glutamate 215. Lysine 257 acts as the Schiff-base intermediate with dihydroxyacetone-P in catalysis. Residues 299 to 301 (SGG) and arginine 329 each bind substrate.

This sequence belongs to the class I fructose-bisphosphate aldolase family. In terms of assembly, homotetramer. As to expression, expressed in leaf mesophyll cells.

It is found in the plastid. The protein resides in the chloroplast. The protein localises to the plastoglobule. It catalyses the reaction beta-D-fructose 1,6-bisphosphate = D-glyceraldehyde 3-phosphate + dihydroxyacetone phosphate. The protein operates within carbohydrate degradation; glycolysis; D-glyceraldehyde 3-phosphate and glycerone phosphate from D-glucose: step 4/4. Plays a key role in glycolysis and gluconeogenesis. In Oryza sativa subsp. japonica (Rice), this protein is Fructose-bisphosphate aldolase, chloroplastic.